The primary structure comprises 62 residues: Large ribosomal subunit protein bL33 (62 aa).

It belongs to the bacterial ribosomal protein bL33 family.

This Phocaeicola vulgatus (strain ATCC 8482 / DSM 1447 / JCM 5826 / CCUG 4940 / NBRC 14291 / NCTC 11154) (Bacteroides vulgatus) protein is Large ribosomal subunit protein bL33.